We begin with the raw amino-acid sequence, 1087 residues long: Band 4.1-like protein 3 (1087 aa).

An N-acetylmethionine modification is found at Met1. A disordered region spans residues 1–43 (MTTESGSDSESKPDQEAEPQEAAGAQGRAGAPVPEPPKEEQQQ). Thr2 carries the N-acetylthreonine; in Band 4.1-like protein 3, N-terminally processed modification. Low complexity predominate over residues 20–32 (QEAAGAQGRAGAP). Ser88 carries the phosphoserine modification. In terms of domain architecture, FERM spans 110 to 391 (MQCKVILLDG…EHHTFFRLLL (282 aa)). Positions 394–513 (APPKKFLTLG…PGLGTDSCPL (120 aa)) are hydrophilic. A phosphoserine mark is found at Ser420, Ser443, and Ser460. Polar residues predominate over residues 459–469 (ISQTNLITTVT). Disordered regions lie at residues 459-529 (ISQT…TELR), 541-563 (GYEPSRAEHLPGEPALDSDGPGR), 675-715 (SASL…EDAE), and 937-965 (SETLEQKPHFESSTVKTETISFGSVSPGG). Phosphothreonine is present on residues Thr469 and Thr492. The tract at residues 514-860 (SPPSTHCAPT…VVQETVLVEE (347 aa)) is spectrin--actin-binding. A compositionally biased stretch (polar residues) spans 516–526 (PSTHCAPTSPT). Over residues 681-691 (DPSDSSEEETD) the composition is skewed to acidic residues. Over residues 698-707 (AADGETTATE) the composition is skewed to low complexity. Residue Thr706 is modified to Phosphothreonine. Phosphoserine occurs at positions 708, 960, and 962. Residues 861–1083 (RRVVHASGDA…VHKETEITPE (223 aa)) form a C-terminal (CTD) region. Positions 947–960 (ESSTVKTETISFGS) are enriched in polar residues. Residue Thr1081 is modified to Phosphothreonine.

Interacts (via FERM domain) with CADM1. Interacts (via FERM domain) with PRMT3; the interaction is direct and inhibits the protein-arginine N-methyltransferase activity of PRMT3. Interacts with PRMT5. Interacts with PRMT6. In terms of tissue distribution, expressed at high levels in brain, with lower levels in kidney, intestine, and testis. Detected in lung.

The protein resides in the cytoplasm. Its subcellular location is the cytoskeleton. The protein localises to the cell junction. It is found in the cell membrane. Tumor suppressor that inhibits cell proliferation and promotes apoptosis. Modulates the activity of protein arginine N-methyltransferases, including PRMT3 and PRMT5. This Homo sapiens (Human) protein is Band 4.1-like protein 3.